An 89-amino-acid chain; its full sequence is Pyrin domain-containing protein 1 (89 aa).

The 89-residue stretch at 1–89 (MGTKREAILK…EEAARLQRAA (89 aa)) folds into the Pyrin domain.

In terms of assembly, interacts with PYCARD/ASC (via pyrin domain). In terms of processing, phosphorylated. In terms of tissue distribution, predominantly expressed in monocytes, macrophages and granulocytes.

The protein resides in the cytoplasm. Its function is as follows. Associates with PYCARD/ASC and modulates its ability to collaborate with MEFV/pyrin and NLRP3/cryopyrin in NF-kappa-B and pro-caspase-1 activation. Suppresses kinase activity of NF-kappa-B inhibitor kinase (IKK) complex, expression of NF-kappa-B inducible genes and inhibits NF-kappa-B activation by cytokines and LPS. This Homo sapiens (Human) protein is Pyrin domain-containing protein 1.